Reading from the N-terminus, the 122-residue chain is Large ribosomal subunit protein uL14 (122 aa).

The protein belongs to the universal ribosomal protein uL14 family. As to quaternary structure, part of the 50S ribosomal subunit. Forms a cluster with proteins L3 and L19. In the 70S ribosome, L14 and L19 interact and together make contacts with the 16S rRNA in bridges B5 and B8.

In terms of biological role, binds to 23S rRNA. Forms part of two intersubunit bridges in the 70S ribosome. In Rhodopirellula baltica (strain DSM 10527 / NCIMB 13988 / SH1), this protein is Large ribosomal subunit protein uL14.